Consider the following 703-residue polypeptide: Protein O-mannosyl-transferase TMEM260 (703 aa).

A run of 8 helical transmembrane segments spans residues 20–40 (GALR…TLTL), 68–88 (PLFT…SVAY), 90–110 (VNLL…YTVF), 137–157 (IAAE…ALTV), 182–202 (SLCN…WILF), 218–238 (LTLA…SSYL), 314–334 (KSSV…FFAW), and 352–372 (FWLQ…ATLV). Residues Asn-403 and Asn-564 are each glycosylated (N-linked (GlcNAc...) asparagine).

Belongs to the glycosyltransferase 117 (GT117) family.

Its subcellular location is the endoplasmic reticulum membrane. The enzyme catalyses a di-trans,poly-cis-dolichyl beta-D-mannosyl phosphate + L-seryl-[protein] = 3-O-(alpha-D-mannosyl)-L-seryl-[protein] + a di-trans,poly-cis-dolichyl phosphate + H(+). It catalyses the reaction a di-trans,poly-cis-dolichyl beta-D-mannosyl phosphate + L-threonyl-[protein] = 3-O-(alpha-D-mannosyl)-L-threonyl-[protein] + a di-trans,poly-cis-dolichyl phosphate + H(+). Its function is as follows. O-mannosyl-transferase that transfers mannosyl residues to the hydroxyl group of serine or threonine residues of proteins. Specifically glycosylates the IPT/TIG domain of target proteins, such as MET and MST1R/RON. TMEM260-mediated O-mannosylated residues are composed of single mannose glycans that are not elongated or modified. The polypeptide is Protein O-mannosyl-transferase TMEM260 (Mus musculus (Mouse)).